A 353-amino-acid chain; its full sequence is Cyanuric acid amidohydrolase (353 aa).

Residues Met-1–Tyr-90 form an RU A region. Residues Arg-49 and Ser-69–Gly-70 each bind substrate. Residues Gly-96–Asp-231 are RU B. Residue Lys-145 is part of the active site. Substrate contacts are provided by residues Arg-177 and Ser-214–Ser-215. Residue Ser-214 is the Nucleophile of the active site. Residues Leu-237–Arg-353 form an RU C region. Glu-275 contributes to the Mg(2+) binding site. Substrate is bound by residues Arg-302 and Ser-321–Gly-322. 5 residues coordinate Mg(2+): Ala-324, Gln-327, Gly-328, Pro-329, and Gly-332.

This sequence belongs to the cyclic amide hydrolase (CyAH) family. In terms of assembly, homotetramer.

It catalyses the reaction cyanurate + H2O = 1-carboxybiuret + H(+). It participates in xenobiotic degradation; atrazine degradation; biuret from cyanurate: step 1/1. Inhibited by barbituric acid. In terms of biological role, responsible for the hydrolysis of cyanuric acid, an intermediate formed during catabolism of s-triazine based compounds in herbicides such as atrazine and polymers such as melamine. Catalyzes the hydrolytic opening of the s-triazine ring of cyanuric acid (2,4,6-trihydroxy-s-triazine) to yield carbon dioxide and carboxybiuret, which spontaneously decarboxylates to biuret. Required for growth on melamine or cyanuric acid as sole nitrogen source. The polypeptide is Cyanuric acid amidohydrolase (Rhodococcus sp).